The following is a 168-amino-acid chain: Photosystem I assembly protein Ycf3 (168 aa).

3 TPR repeats span residues 35–68 (AFTYYRDGMSAQSEGEYAEALQNYYEAMRLEIDP), 72–105 (SYILYNIGLIHTSNGEHAKALEYYFQALERNPSL), and 120–153 (GEQAIQQGDSETSEAWFNQAADYWKQAIALAPSN).

Belongs to the Ycf3 family.

The protein localises to the plastid. It is found in the chloroplast thylakoid membrane. Functionally, essential for the assembly of the photosystem I (PSI) complex. May act as a chaperone-like factor to guide the assembly of the PSI subunits. The chain is Photosystem I assembly protein Ycf3 from Physcomitrium patens (Spreading-leaved earth moss).